Here is a 151-residue protein sequence, read N- to C-terminus: Transcriptional regulator MraZ (151 aa).

2 consecutive SpoVT-AbrB domains span residues 7–53 (EYDC…SQTE) and 82–125 (INEV…SPDL).

The protein belongs to the MraZ family. Forms oligomers.

The protein resides in the cytoplasm. The protein localises to the nucleoid. This Cytophaga hutchinsonii (strain ATCC 33406 / DSM 1761 / CIP 103989 / NBRC 15051 / NCIMB 9469 / D465) protein is Transcriptional regulator MraZ.